Consider the following 1106-residue polypeptide: Translation initiation factor IF-2 (1106 aa).

Composition is skewed to low complexity over residues 57–72 (GKAAGGAKAPAKPDAG) and 81–97 (APSTPSQSAGAPASAPP). Disordered stretches follow at residues 57-434 (GKAA…QKVH) and 466-497 (PSKPKNLPGNKGARPVALRRRKKETTRQRQRR). 2 stretches are compositionally biased toward pro residues: residues 113–123 (PAKPAPSAPPS) and 138–148 (PAKPAPSAPPS). The segment covering 172–199 (AKPVAKPASAPAPARPAQPLRPQASNRP) has biased composition (low complexity). 2 stretches are compositionally biased toward pro residues: residues 200-214 (PQQPSNRPPARPAAK) and 223-235 (TAPPPRPARPGAP). Composition is skewed to low complexity over residues 251 to 292 (PNQQ…QQRR), 319 to 329 (PQGRQGGAPSR), and 395 to 405 (YRPAAAPGMAG). Basic and acidic residues predominate over residues 408–422 (RRPDWDDSARLDALR). A compositionally biased stretch (basic residues) spans 482 to 497 (ALRRRKKETTRQRQRR). Residues 598-771 (RRPPVVTVMG…LLVTEVEDLK (174 aa)) enclose the tr-type G domain. The segment at 607 to 614 (GHVDHGKT) is G1. GTP is bound at residue 607–614 (GHVDHGKT). The interval 632 to 636 (GITQH) is G2. Positions 657 to 660 (DTPG) are G3. Residues 657–661 (DTPGH) and 711–714 (NKVD) contribute to the GTP site. Positions 711-714 (NKVD) are G4. Residues 747–749 (SAL) are G5.

This sequence belongs to the TRAFAC class translation factor GTPase superfamily. Classic translation factor GTPase family. IF-2 subfamily.

It localises to the cytoplasm. In terms of biological role, one of the essential components for the initiation of protein synthesis. Protects formylmethionyl-tRNA from spontaneous hydrolysis and promotes its binding to the 30S ribosomal subunits. Also involved in the hydrolysis of GTP during the formation of the 70S ribosomal complex. This is Translation initiation factor IF-2 from Synechococcus sp. (strain RCC307).